The chain runs to 294 residues: Bifunctional protein FolD (294 aa).

Residues 166–168, Ser-191, and Ile-232 each bind NADP(+); that span reads GRS.

It belongs to the tetrahydrofolate dehydrogenase/cyclohydrolase family. In terms of assembly, homodimer.

The catalysed reaction is (6R)-5,10-methylene-5,6,7,8-tetrahydrofolate + NADP(+) = (6R)-5,10-methenyltetrahydrofolate + NADPH. It catalyses the reaction (6R)-5,10-methenyltetrahydrofolate + H2O = (6R)-10-formyltetrahydrofolate + H(+). The protein operates within one-carbon metabolism; tetrahydrofolate interconversion. In terms of biological role, catalyzes the oxidation of 5,10-methylenetetrahydrofolate to 5,10-methenyltetrahydrofolate and then the hydrolysis of 5,10-methenyltetrahydrofolate to 10-formyltetrahydrofolate. The protein is Bifunctional protein FolD of Bradyrhizobium sp. (strain BTAi1 / ATCC BAA-1182).